We begin with the raw amino-acid sequence, 496 residues long: Sugar transporter ERD6 (496 aa).

6 consecutive transmembrane segments (helical) span residues 58–78 (VFLS…GVGF), 94–114 (VAEY…GAVF), 128–148 (MLFC…AQNA), 156–176 (LLLG…IAEI), 183–203 (GSFV…FFII), and 211–231 (LLTV…FFIP). A Phosphoserine modification is found at S256. 6 helical membrane passes run 292-312 (YPLI…SSGV), 329-349 (IGTS…TVLV), 364-384 (AMGL…FGIL), 394-414 (IGVL…PWII), 430-450 (LVTV…NFML), and 456-476 (GMFL…YFLV).

The protein belongs to the major facilitator superfamily. Sugar transporter (TC 2.A.1.1) family. Expressed in both shoots and roots. In roots, expressed in epidermal cells and especially strongly in cortex cells. In flowers, expressed in sepals.

Its subcellular location is the membrane. Sugar transporter. The chain is Sugar transporter ERD6 (ERD6) from Arabidopsis thaliana (Mouse-ear cress).